Reading from the N-terminus, the 170-residue chain is Fimbrial protein (170 aa).

Positions Met1–Gly7 are excised as a propeptide. Phe8 carries the post-translational modification N-methylphenylalanine. A helical transmembrane segment spans residues Phe8 to Leu28. The O-linked (Gal...) serine glycan is linked to Ser70. Ser100 is subject to O-(sn-1-glycerophosphoryl)serine. A disulfide bridge links Cys127 with Cys163.

Belongs to the N-Me-Phe pilin family. As to quaternary structure, the pili are polar flexible filaments of about 5.4 nanometers diameter and 2.5 micrometers average length; they consist of only a single polypeptide chain arranged in a helical configuration of five subunits per turn in the assembled pilus. Post-translationally, O-linked glycan consists of GlcNAc-Gal disaccharide.

Its subcellular location is the fimbrium. The protein resides in the membrane. Functionally, major component of the type IV pilus (T4P) that plays a role in cellular adherence, microcolony formation as well as twitching motility. In Neisseria meningitidis serogroup A / serotype 4A (strain DSM 15465 / Z2491), this protein is Fimbrial protein (pilE).